The chain runs to 464 residues: Protein ABHD18 (464 aa).

Positions 1 to 24 (MGVSKLDILYRRLLLTKLFIRGWG) are cleaved as a signal peptide. The N-linked (GlcNAc...) asparagine glycan is linked to Asn-341.

This sequence belongs to the AB hydrolase superfamily.

Its subcellular location is the secreted. The protein is Protein ABHD18 of Mus musculus (Mouse).